The chain runs to 167 residues: uncharacterized protein (167 aa).

This is an uncharacterized protein from Xenopus laevis (African clawed frog).